The chain runs to 1441 residues: Receptor-type tyrosine-protein phosphatase T (1441 aa).

The signal sequence occupies residues 1 to 25 (MASLAALALSLLLRLQLPPLPGARA). At 26-747 (QSAAGGCSFD…EKQVDNTVKM (722 aa)) the chain is on the extracellular side. The MAM domain occupies 30-191 (GGCSFDEHYS…VRVLAHPCRK (162 aa)). N-linked (GlcNAc...) asparagine glycans are attached at residues Asn78, Asn98, Asn137, and Asn208. One can recognise an Ig-like C2-type domain in the interval 193–284 (PHFLRLQNVE…SGVSNYAELI (92 aa)). Cys213 and Cys267 are oxidised to a cystine. Fibronectin type-III domains are found at residues 291–384 (PIAP…TKCA), 389–483 (GPQN…TEED), 484–590 (VPGA…SAPS), and 591–726 (MPEY…ATKG). Residues Asn421, Asn510, Asn547, Asn601, Asn654, and Asn684 are each glycosylated (N-linked (GlcNAc...) asparagine). A helical transmembrane segment spans residues 748–768 (AGVIAGLLMFIIILLGVMLTI). Topologically, residues 769–1441 (KRRRNAYSYS…EVALEYLSSF (673 aa)) are cytoplasmic. The tract at residues 790–839 (TQSGAQREMGPVASADKPTTKLSASRNDEGFSSSSQDVNGFTDGSRGELS) is disordered. The segment covering 809-828 (TKLSASRNDEGFSSSSQDVN) has biased composition (polar residues). 2 Tyrosine-protein phosphatase domains span residues 889-1143 (FKEE…ILEA) and 1175-1437 (IKDE…ALEY). Substrate is bound by residues Asp1052, 1084 to 1090 (CSAGAGR), and Gln1128. The active-site Phosphocysteine intermediate is Cys1084. Phosphoserine is present on Ser1208. Cys1378 (phosphocysteine intermediate) is an active-site residue.

This sequence belongs to the protein-tyrosine phosphatase family. Receptor class 2B subfamily. Expressed in colon, lung, heart and testis, as well as in fetal and adult brain. Not detected in muscle and peripheral blood leukocytes.

Its subcellular location is the membrane. It carries out the reaction O-phospho-L-tyrosyl-[protein] + H2O = L-tyrosyl-[protein] + phosphate. May be involved in both signal transduction and cellular adhesion in the CNS. In Homo sapiens (Human), this protein is Receptor-type tyrosine-protein phosphatase T (PTPRT).